Here is a 450-residue protein sequence, read N- to C-terminus: Zinc finger protein 277 (450 aa).

Ala2 carries the post-translational modification N-acetylalanine. 2 consecutive C2H2-type zinc fingers follow at residues 224–248 (LQCL…KKQH) and 355–381 (HQCR…ETKH).

Belongs to the ZNF277 family. Interacts (via zinc-finger domains) with RPS2/40S ribosomal protein S2, perhaps as nascent RPS2 is synthesized during translation; the interaction is direct; the interaction is extra-ribosomal. Interaction with RPS2 competes with the binding of RPS2 to protein arginine methyltransferase PRMT3. Interacts with Polycomb group (PcG) complex protein BMI1. May be part of a complex including at least ZNF277, BMI1 and RNF2/RING2.

It is found in the nucleus. Functionally, probable transcription factor. Involved in modulation of cellular senescence; represses transcription of the tumor suppressor gene INK4A/ARF, perhaps acting via the Polycomb group (PcG) complex PRC1. This chain is Zinc finger protein 277 (ZNF277), found in Homo sapiens (Human).